A 206-amino-acid polypeptide reads, in one-letter code: uncharacterized protein (206 aa).

This is an uncharacterized protein from Citrus psorosis virus (isolate Spain/P-121) (CPsV).